Here is an 81-residue protein sequence, read N- to C-terminus: X antigen family member 1 (81 aa).

Lys-12 is covalently cross-linked (Glycyl lysine isopeptide (Lys-Gly) (interchain with G-Cter in SUMO2)). The residue at position 20 (Ser-20) is a Phosphoserine. Glycyl lysine isopeptide (Lys-Gly) (interchain with G-Cter in SUMO2) cross-links involve residues Lys-61 and Lys-65.

Belongs to the GAGE family. In terms of tissue distribution, in normal tissues, highly expressed in testis. Expressed also in many different types of cancers: highly expressed in breast cancer, prostate cancer and many types of lung cancers, including squamous cell carcinoma, small cell carcinoma, non-small cell carcinoma, and adenocarcinoma, as well as in Ewing's cell lines, in some Ewing's sarcoma patient samples, and in one of one alveolar rhabdomyosarcoma patient sample.

The chain is X antigen family member 1 from Homo sapiens (Human).